Consider the following 205-residue polypeptide: Protein N-terminal glutamine amidohydrolase (205 aa).

Catalysis depends on residues Cys20, His74, and Asp90.

This sequence belongs to the NTAQ1 family. As to quaternary structure, monomer.

The enzyme catalyses N-terminal L-glutaminyl-[protein] + H2O = N-terminal L-glutamyl-[protein] + NH4(+). Functionally, mediates the side-chain deamidation of N-terminal glutamine residues to glutamate, an important step in N-end rule pathway of protein degradation. Conversion of the resulting N-terminal glutamine to glutamate renders the protein susceptible to arginylation, polyubiquitination and degradation as specified by the N-end rule. Does not act on substrates with internal or C-terminal glutamine and does not act on non-glutamine residues in any position. The protein is Protein N-terminal glutamine amidohydrolase (tun) of Drosophila melanogaster (Fruit fly).